Here is a 235-residue protein sequence, read N- to C-terminus: Peroxynitrite isomerase 2 (235 aa).

A GXWXGXG motif is present at residues 82–88 (GVWRGEG). Residues K198 and H225 each contribute to the heme b site.

The protein belongs to the nitrobindin family. Homodimer. Requires heme b as cofactor.

The catalysed reaction is peroxynitrite = nitrate. The protein operates within nitrogen metabolism. In terms of biological role, heme-binding protein able to scavenge peroxynitrite and to protect free L-tyrosine against peroxynitrite-mediated nitration, by acting as a peroxynitrite isomerase that converts peroxynitrite to nitrate. Therefore, this protein likely plays a role in peroxynitrite sensing and in the detoxification of reactive nitrogen and oxygen species (RNS and ROS, respectively). Is able to bind nitric oxide (NO) in vitro, but may act as a sensor of peroxynitrite levels in vivo. The sequence is that of Peroxynitrite isomerase 2 from Mycolicibacterium paratuberculosis (strain ATCC BAA-968 / K-10) (Mycobacterium paratuberculosis).